A 79-amino-acid chain; its full sequence is Small ribosomal subunit protein uS17 (79 aa).

The protein belongs to the universal ribosomal protein uS17 family. As to quaternary structure, part of the 30S ribosomal subunit.

One of the primary rRNA binding proteins, it binds specifically to the 5'-end of 16S ribosomal RNA. This chain is Small ribosomal subunit protein uS17, found in Bartonella henselae (strain ATCC 49882 / DSM 28221 / CCUG 30454 / Houston 1) (Rochalimaea henselae).